A 1057-amino-acid polypeptide reads, in one-letter code: Carbamoyl phosphate synthase large chain (1057 aa).

Positions 1–401 (MPKRNDIKTI…SLLKAIRSLE (401 aa)) are carboxyphosphate synthetic domain. Residues Arg129, Arg169, Gly175, Gly176, Lys208, Ile210, Glu215, Gly241, Ile242, His243, Gln284, and Glu298 each coordinate ATP. Residues 133 to 327 (RTLMNDLNVP…IAKLAAKIAV (195 aa)) enclose the ATP-grasp 1 domain. Gln284, Glu298, and Asn300 together coordinate Mg(2+). Mn(2+) is bound by residues Gln284, Glu298, and Asn300. Residues 402 to 546 (YGVHHLGLPN…YGTYETENES (145 aa)) form an oligomerization domain region. Residues 547-929 (IVTDKEKILV…ALFKGLTGSG (383 aa)) form a carbamoyl phosphate synthetic domain region. In terms of domain architecture, ATP-grasp 2 spans 671 to 861 (EALLRKINVP…MAQLAMRAII (191 aa)). 10 residues coordinate ATP: Arg707, Arg746, Leu748, Glu752, Gly777, Val778, His779, Ser780, Gln820, and Glu832. The Mg(2+) site is built by Gln820, Glu832, and Asn834. 3 residues coordinate Mn(2+): Gln820, Glu832, and Asn834. In terms of domain architecture, MGS-like spans 930–1057 (VEVKDHGTVL…ESMTFTMRQM (128 aa)). The allosteric domain stretch occupies residues 930 to 1057 (VEVKDHGTVL…ESMTFTMRQM (128 aa)).

Belongs to the CarB family. In terms of assembly, composed of two chains; the small (or glutamine) chain promotes the hydrolysis of glutamine to ammonia, which is used by the large (or ammonia) chain to synthesize carbamoyl phosphate. Tetramer of heterodimers (alpha,beta)4. Mg(2+) is required as a cofactor. The cofactor is Mn(2+).

The catalysed reaction is hydrogencarbonate + L-glutamine + 2 ATP + H2O = carbamoyl phosphate + L-glutamate + 2 ADP + phosphate + 2 H(+). It catalyses the reaction hydrogencarbonate + NH4(+) + 2 ATP = carbamoyl phosphate + 2 ADP + phosphate + 2 H(+). The protein operates within amino-acid biosynthesis; L-arginine biosynthesis; carbamoyl phosphate from bicarbonate: step 1/1. Its pathway is pyrimidine metabolism; UMP biosynthesis via de novo pathway; (S)-dihydroorotate from bicarbonate: step 1/3. Its function is as follows. Large subunit of the glutamine-dependent carbamoyl phosphate synthetase (CPSase). CPSase catalyzes the formation of carbamoyl phosphate from the ammonia moiety of glutamine, carbonate, and phosphate donated by ATP, constituting the first step of 2 biosynthetic pathways, one leading to arginine and/or urea and the other to pyrimidine nucleotides. The large subunit (synthetase) binds the substrates ammonia (free or transferred from glutamine from the small subunit), hydrogencarbonate and ATP and carries out an ATP-coupled ligase reaction, activating hydrogencarbonate by forming carboxy phosphate which reacts with ammonia to form carbamoyl phosphate. The chain is Carbamoyl phosphate synthase large chain from Staphylococcus aureus (strain Mu3 / ATCC 700698).